Consider the following 875-residue polypeptide: Alanine--tRNA ligase (875 aa).

Residues His562, His566, Cys665, and His669 each coordinate Zn(2+).

Belongs to the class-II aminoacyl-tRNA synthetase family. Requires Zn(2+) as cofactor.

It is found in the cytoplasm. It catalyses the reaction tRNA(Ala) + L-alanine + ATP = L-alanyl-tRNA(Ala) + AMP + diphosphate. In terms of biological role, catalyzes the attachment of alanine to tRNA(Ala) in a two-step reaction: alanine is first activated by ATP to form Ala-AMP and then transferred to the acceptor end of tRNA(Ala). Also edits incorrectly charged Ser-tRNA(Ala) and Gly-tRNA(Ala) via its editing domain. This chain is Alanine--tRNA ligase, found in Saccharophagus degradans (strain 2-40 / ATCC 43961 / DSM 17024).